Consider the following 75-residue polypeptide: Small ribosomal subunit protein bS21 (75 aa).

Residues 52-75 form a disordered region; sequence RRARKLARKRAQREGLIGGRPGAR. The segment covering 53–62 has biased composition (basic residues); the sequence is RARKLARKRA.

It belongs to the bacterial ribosomal protein bS21 family.

This is Small ribosomal subunit protein bS21 from Brucella anthropi (strain ATCC 49188 / DSM 6882 / CCUG 24695 / JCM 21032 / LMG 3331 / NBRC 15819 / NCTC 12168 / Alc 37) (Ochrobactrum anthropi).